Reading from the N-terminus, the 216-residue chain is Small ribosomal subunit protein uS3c (216 aa).

Residues 43-118 form the KH type-2 domain; sequence INNYVKKNMR…KLNITITRIE (76 aa).

This sequence belongs to the universal ribosomal protein uS3 family. Part of the 30S ribosomal subunit.

The protein localises to the plastid. The protein is Small ribosomal subunit protein uS3c (rps3) of Cuscuta reflexa (Southern Asian dodder).